Here is a 441-residue protein sequence, read N- to C-terminus: Nucleolar and spindle-associated protein 1 (441 aa).

Disordered regions lie at residues A47–K186 and M216–K267. Composition is skewed to polar residues over residues E56 to Q74 and D100 to F116. The span at Q117–D126 shows a compositional bias: basic and acidic residues. S124 is modified (phosphoserine; by ATM). At S135 the chain carries Phosphoserine. Residues R152–K171 show a composition bias toward basic and acidic residues. At T182 the chain carries Phosphothreonine. Positions G237 to Q382 are interaction with microtubules. S240 carries the post-translational modification Phosphoserine. Positions V241 to L264 are enriched in polar residues. At T244 the chain carries Phosphothreonine. 5 positions are modified to phosphoserine: S247, S255, S269, S276, and S311. The segment at A286–A319 is disordered. A phosphothreonine mark is found at T314, T338, and T349. Phosphoserine occurs at positions 352 and 363. The short motif at K384 to N390 is the KEN box element. The disordered stretch occupies residues K401 to A427. Residues H407–M432 are a coiled coil. A compositionally biased stretch (basic and acidic residues) spans Q409–E424. Position 411 is an N6-acetyllysine (K411).

It belongs to the NUSAP family. As to quaternary structure, interacts with DNA and microtubules. Microtubule bundling is inhibited by IPO7, KPNA2 and KPNB1 while association with DNA is also inhibited by IPO7 and KPNA2. Ubiquitinated. Ubiquitination by FZR1 may lead to proteasome-dependent degradation of this protein. In terms of processing, phosphorylation by ATM in G2/M-phase induces mitotic arrest.

It localises to the cytoplasm. The protein resides in the nucleus. Its subcellular location is the nucleolus. It is found in the cytoskeleton. The protein localises to the spindle. It localises to the chromosome. Functionally, microtubule-associated protein with the capacity to bundle and stabilize microtubules. May associate with chromosomes and promote the organization of mitotic spindle microtubules around them. This chain is Nucleolar and spindle-associated protein 1 (NUSAP1), found in Homo sapiens (Human).